The primary structure comprises 862 residues: Rab GTPase-binding effector protein 1 (862 aa).

Alanine 2 is subject to N-acetylalanine. Residues 11–328 (DVSLQQRVAE…KDQEEDEQQR (318 aa)) adopt a coiled-coil conformation. Lysine 282 carries the post-translational modification N6-acetyllysine. 2 disordered regions span residues 315–340 (ELKK…KIDT) and 355–374 (EESS…THGS). Phosphoserine occurs at positions 374, 377, and 407. Threonine 408 is modified (phosphothreonine). The residue at position 410 (serine 410) is a Phosphoserine. Residues 534–816 (DMCSNYEKQL…LQTELDVSEQ (283 aa)) adopt a coiled-coil conformation.

This sequence belongs to the rabaptin family. In terms of assembly, heterodimer with RABGEF1. The heterodimer binds RAB4A and RAB5A that have been activated by GTP-binding. Interacts with TSC2. Interacts with GGA1 (via GAE domain), GGA2 (via GAE domain) and GGA3 (via GAE domain). Interacts with AP1G1 (via GAE domain). Interacts with AP1G2 (via GAE domain). Interacts with ECPAS. Interacts with KCNH1. Interacts with PKD1 (via C-terminal domain) and GGA1; the interactions recruit PKD1:PKD2 complex to GGA1 and ARL3 at trans-Golgi network. Interacts with KCNH1. Proteolytic cleavage by caspases in apoptotic cells causes loss of endosome fusion activity.

It is found in the cytoplasm. It localises to the early endosome. Its subcellular location is the recycling endosome. The protein localises to the cytoplasmic vesicle. Functionally, rab effector protein acting as linker between gamma-adaptin, RAB4A and RAB5A. Involved in endocytic membrane fusion and membrane trafficking of recycling endosomes. Involved in KCNH1 channels trafficking to and from the cell membrane. Stimulates RABGEF1 mediated nucleotide exchange on RAB5A. Mediates the traffic of PKD1:PKD2 complex from the endoplasmic reticulum through the Golgi to the cilium. This Rattus norvegicus (Rat) protein is Rab GTPase-binding effector protein 1 (Rabep1).